A 142-amino-acid chain; its full sequence is Nucleoside diphosphate kinase (142 aa).

Lysine 11, phenylalanine 59, arginine 87, threonine 93, arginine 104, and asparagine 114 together coordinate ATP. The Pros-phosphohistidine intermediate role is filled by histidine 117.

The protein belongs to the NDK family. It depends on Mg(2+) as a cofactor.

Its subcellular location is the cytoplasm. The catalysed reaction is a 2'-deoxyribonucleoside 5'-diphosphate + ATP = a 2'-deoxyribonucleoside 5'-triphosphate + ADP. It carries out the reaction a ribonucleoside 5'-diphosphate + ATP = a ribonucleoside 5'-triphosphate + ADP. Functionally, major role in the synthesis of nucleoside triphosphates other than ATP. The ATP gamma phosphate is transferred to the NDP beta phosphate via a ping-pong mechanism, using a phosphorylated active-site intermediate. The protein is Nucleoside diphosphate kinase of Hyperthermus butylicus (strain DSM 5456 / JCM 9403 / PLM1-5).